The primary structure comprises 293 residues: Protease HtpX (293 aa).

A run of 2 helical transmembrane segments spans residues 4–24 (IALF…VLSL) and 34–54 (GLMI…LLMS). His-139 is a Zn(2+) binding site. Glu-140 is a catalytic residue. His-143 is a Zn(2+) binding site. A run of 2 helical transmembrane segments spans residues 158–178 (VVNT…AGFM) and 193–213 (LIYF…ASII). A Zn(2+)-binding site is contributed by Glu-222.

This sequence belongs to the peptidase M48B family. Zn(2+) is required as a cofactor.

The protein resides in the cell inner membrane. The polypeptide is Protease HtpX (Escherichia fergusonii (strain ATCC 35469 / DSM 13698 / CCUG 18766 / IAM 14443 / JCM 21226 / LMG 7866 / NBRC 102419 / NCTC 12128 / CDC 0568-73)).